The chain runs to 320 residues: tRNA dimethylallyltransferase (320 aa).

Residue 14-21 (GPTASGKT) coordinates ATP. 16–21 (TASGKT) is a substrate binding site. Interaction with substrate tRNA regions lie at residues 39–42 (DSAL) and 163–167 (QRLQR).

The protein belongs to the IPP transferase family. Monomer. Requires Mg(2+) as cofactor.

It catalyses the reaction adenosine(37) in tRNA + dimethylallyl diphosphate = N(6)-dimethylallyladenosine(37) in tRNA + diphosphate. Functionally, catalyzes the transfer of a dimethylallyl group onto the adenine at position 37 in tRNAs that read codons beginning with uridine, leading to the formation of N6-(dimethylallyl)adenosine (i(6)A). The chain is tRNA dimethylallyltransferase from Thioalkalivibrio sulfidiphilus (strain HL-EbGR7).